Here is an 816-residue protein sequence, read N- to C-terminus: Phosphatidylinositol 4-kinase beta (816 aa).

The interval 1-30 is disordered; it reads MGDTVVEPTPLKPTSESTPGPAGSNGGSLL. Residue Gly2 is modified to N-acetylglycine. An interaction with ACBD3 region spans residues 2-68; sequence GDTVVEPTPL…VKLLHGGVAI (67 aa). In terms of domain architecture, PIK helical spans 52–242; it reads CQEVLEKVKL…GTKLRKLILS (191 aa). Residues 248–318 form a disordered region; it reads AHRKRELPSL…TESIDNSFSS (71 aa). The residue at position 258 (Ser258) is a Phosphoserine. At Thr263 the chain carries Phosphothreonine. Ser266, Ser275, Ser277, Ser284, and Ser294 each carry phosphoserine. Polar residues-rich tracts occupy residues 278-297 and 306-318; these read DATA…SNPK and SSST…SFSS. Position 428 is a phosphoserine (Ser428). Thr438 carries the phosphothreonine modification. Ser511 is modified (phosphoserine). Phosphothreonine occurs at positions 517 and 519. The region spanning 535 to 801 is the PI3K/PI4K catalytic domain; the sequence is EPWQEKVRRI…MVDGSMRSIT (267 aa). Residues 541 to 547 are G-loop; sequence VRRIREG. A catalytic loop region spans residues 668-676; that stretch reads QVKDRHNGN. Residues 687–711 are activation loop; it reads HIDFGFILSSSPRNLGFETSAFKLT.

The protein belongs to the PI3/PI4-kinase family. Type III PI4K subfamily. Interacts with ARF1 and ARF3 in the Golgi complex, but not with ARF4, ARF5 or ARF6. Interacts with NCS1/FREQ in a calcium-independent manner. Interacts with CALN1/CABP8 and CALN2/CABP7; in a calcium-dependent manner; this interaction competes with NCS1/FREQ binding. Interacts with ACBD3. Interacts with ARMH3, YWHAB, YWHAE, YWHAG, YWHAH, YWHAQ, YWHAZ and SFN. Interacts with GGA2 (via VHS domain); the interaction is important for PI4KB location at the Golgi apparatus membrane. Interacts with ATG9A. Requires Mg(2+) as cofactor. Mn(2+) is required as a cofactor.

The protein resides in the endomembrane system. Its subcellular location is the mitochondrion outer membrane. It is found in the rough endoplasmic reticulum membrane. The protein localises to the golgi apparatus. It localises to the golgi apparatus membrane. It catalyses the reaction a 1,2-diacyl-sn-glycero-3-phospho-(1D-myo-inositol) + ATP = a 1,2-diacyl-sn-glycero-3-phospho-(1D-myo-inositol 4-phosphate) + ADP + H(+). Inhibited by wortmannin. Increased kinase activity upon interaction with NCS1/FREQ. Functionally, phosphorylates phosphatidylinositol (PI) in the first committed step in the production of the second messenger inositol-1,4,5,-trisphosphate (PIP). May regulate Golgi disintegration/reorganization during mitosis, possibly via its phosphorylation. Involved in Golgi-to-plasma membrane trafficking. May play an important role in the inner ear development. The chain is Phosphatidylinositol 4-kinase beta (PI4KB) from Otolemur garnettii (Small-eared galago).